A 93-amino-acid polypeptide reads, in one-letter code: Small ribosomal subunit protein uS19 (93 aa).

The protein belongs to the universal ribosomal protein uS19 family.

Functionally, protein S19 forms a complex with S13 that binds strongly to the 16S ribosomal RNA. This chain is Small ribosomal subunit protein uS19, found in Brevibacillus brevis (strain 47 / JCM 6285 / NBRC 100599).